The chain runs to 385 residues: uncharacterized protein (385 aa).

9 consecutive transmembrane segments (helical) span residues 12–32 (GVAILGILLLNISAFGLPKAA), 50–70 (WAFLDLIGQVKFLTLFALLFG), 90–110 (LLVLLGFIHGLLFWDGDILLA), 132–152 (FNTGVMLYLVGLGVLLLLGLI), 195–215 (LALGAQYGWQLAGMMLIGAAL), 233–253 (TGFVLVAIGVTINLPAIALQW), 272–292 (LSAPFQAIGYASLFYGFWPQL), 312–332 (YLLQTLICTTLFYHLGLFMHF), and 335–355 (LELLAFVIPVWLANILFSVIW).

The protein to B.subtilis YxaH and YrkO.

Its subcellular location is the cell membrane. In terms of biological role, involved in transport. This is an uncharacterized protein from Escherichia coli (strain K12).